Reading from the N-terminus, the 79-residue chain is Protein FAM236A (79 aa).

The protein belongs to the FAM236 family.

This Homo sapiens (Human) protein is Protein FAM236A.